A 327-amino-acid chain; its full sequence is Elongation factor P--(R)-beta-lysine ligase (327 aa).

80 to 82 contacts substrate; the sequence is SPE. Residues 104-106 and Asn-113 each bind ATP; that span reads RNE. Tyr-122 provides a ligand contact to substrate. Residue 246-247 coordinates ATP; it reads EL. Position 253 (Glu-253) interacts with substrate. Residue Gly-302 participates in ATP binding.

This sequence belongs to the class-II aminoacyl-tRNA synthetase family. EpmA subfamily. Homodimer.

The catalysed reaction is D-beta-lysine + L-lysyl-[protein] + ATP = N(6)-((3R)-3,6-diaminohexanoyl)-L-lysyl-[protein] + AMP + diphosphate + H(+). Its function is as follows. With EpmB is involved in the beta-lysylation step of the post-translational modification of translation elongation factor P (EF-P). Catalyzes the ATP-dependent activation of (R)-beta-lysine produced by EpmB, forming a lysyl-adenylate, from which the beta-lysyl moiety is then transferred to the epsilon-amino group of a conserved specific lysine residue in EF-P. This chain is Elongation factor P--(R)-beta-lysine ligase, found in Haemophilus ducreyi (strain 35000HP / ATCC 700724).